A 347-amino-acid chain; its full sequence is Peptidoglycan recognition protein 3 (347 aa).

The signal sequence occupies residues M1–G26. N-acetylmuramoyl-L-alanine amidase domains follow at residues L77–P185 and P206–I328. An N-linked (GlcNAc...) asparagine glycan is attached at N120. 3 cysteine pairs are disulfide-bonded: C184–C306, C200–C244, and C220–C226. Residues H237 and Y248 each contribute to the peptidoglycan site. The interval H270–N275 is interaction with murein.

Belongs to the N-acetylmuramoyl-L-alanine amidase 2 family. As to quaternary structure, monomer. Homodimer; disulfide-linked. Heterodimer with PGLYRP4; disulfide-linked. As to expression, detected in lung, spleen and stomach, and at low levels in eye, heart, thymus and testis.

The protein localises to the secreted. Its function is as follows. Pattern receptor that binds to murein peptidoglycans (PGN) of Gram-positive bacteria. Has bactericidal activity towards Gram-positive bacteria. May kill Gram-positive bacteria by interfering with peptidoglycan biosynthesis. Also binds to Gram-negative bacteria, and has bacteriostatic activity towards Gram-negative bacteria. Plays a role in innate immunity. The chain is Peptidoglycan recognition protein 3 (Pglyrp3) from Mus musculus (Mouse).